Here is a 242-residue protein sequence, read N- to C-terminus: MEPKYQRILIKLSGEALAGDKGVGIDIPTVQSIAKEIAEVHNSGVQIALVIGGGNLWRGEPAAEAGMDRVQADYTGMLGTVMNALVMADSLQQYGVDTRVQTAIPMQTVAEPYVRGRALRHLEKNRIVVFGAGIGSPYFSTDTTAALRAAEIEAEAILMAKNGVDGVYNADPKKDANAVKFDELTHVEVIKRGLKIMDATASTISMDNDIDLVVFNMNETGNIKRVVLGEQIGTTVSNKASE.

11–14 (KLSG) is a binding site for ATP. Positions 19 to 24 (GDKGVG) are involved in allosteric activation by GTP. Gly-53 serves as a coordination point for UMP. Residues Gly-54 and Arg-58 each coordinate ATP. UMP contacts are provided by residues Asp-73 and 134 to 141 (IGSPYFST). ATP contacts are provided by Asn-162, Tyr-168, and Asp-171.

It belongs to the UMP kinase family. In terms of assembly, homohexamer.

It localises to the cytoplasm. The enzyme catalyses UMP + ATP = UDP + ADP. It participates in pyrimidine metabolism; CTP biosynthesis via de novo pathway; UDP from UMP (UMPK route): step 1/1. With respect to regulation, allosterically activated by GTP. Inhibited by UTP. Functionally, catalyzes the reversible phosphorylation of UMP to UDP. This chain is Uridylate kinase, found in Streptococcus agalactiae serotype Ia (strain ATCC 27591 / A909 / CDC SS700).